The chain runs to 1241 residues: uncharacterized protein (1241 aa).

Positions 21–49 form a coiled coil; it reads ILNDNVREINIAKKEIKQLREYVGILQQN. A run of 3 helical transmembrane segments spans residues 261-281, 918-938, and 947-967; these read VNAI…FVLG, AVVG…GLVA, and GHIV…VIGG. The tract at residues 1005 to 1028 is disordered; sequence THIGKEDSNNGVSTSTNKRSIGKA. The segment covering 1013 to 1028 has biased composition (polar residues); it reads NNGVSTSTNKRSIGKA.

The protein localises to the host membrane. This is an uncharacterized protein from Diadromus pulchellus (Parasitic wasp).